The primary structure comprises 154 residues: Ribonuclease H (154 aa).

Residues 7-148 enclose the RNase H type-1 domain; that stretch reads KPETVEIYTD…ADALAREGIA (142 aa). Asp16, Glu54, Asp76, and Asp140 together coordinate Mg(2+).

Belongs to the RNase H family. In terms of assembly, monomer. It depends on Mg(2+) as a cofactor.

The protein resides in the cytoplasm. It carries out the reaction Endonucleolytic cleavage to 5'-phosphomonoester.. Functionally, endonuclease that specifically degrades the RNA of RNA-DNA hybrids. The polypeptide is Ribonuclease H (Paramagnetospirillum magneticum (strain ATCC 700264 / AMB-1) (Magnetospirillum magneticum)).